We begin with the raw amino-acid sequence, 2282 residues long: Acetyl-CoA carboxylase (2282 aa).

Positions 16–515 (NIEKILIANN…HTGWLDQLIS (500 aa)) constitute a Biotin carboxylation domain. The ATP-grasp domain maps to 170 to 360 (YSECNGVPSE…LPATQLQIAM (191 aa)). 196 to 253 (AQRVGFPAMIKASEGGGGKGIRKVTSMEDLESSFRQVQNEVPGSPIFFMKLVSNARHL) contributes to the ATP binding site. Mn(2+) contacts are provided by Glu-319, Glu-331, and Asn-333. Arg-335 is an active-site residue. Positions 646-720 (FSQEYDPSIL…APGAIIANLE (75 aa)) constitute a Biotinyl-binding domain. Lys-687 bears the N6-biotinyllysine mark. Positions 1109–1129 (GSNSGSPTYGSPLIRSISSSG) are enriched in low complexity. The disordered stretch occupies residues 1109-1141 (GSNSGSPTYGSPLIRSISSSGGSSGGSGFQISP). Residues 1495–1851 (PYPIMDAVQR…SGGEMVPIIS (357 aa)) form the CoA carboxyltransferase N-terminal domain. A carboxyltransferase region spans residues 1495 to 2178 (PYPIMDAVQR…EEDKLKLIDK (684 aa)). 3 residues coordinate CoA: Arg-1761, Lys-2068, and Arg-2070. A CoA carboxyltransferase C-terminal domain is found at 1852-2178 (PIDSPHRDIE…EEDKLKLIDK (327 aa)).

It depends on biotin as a cofactor. The cofactor is Mn(2+).

The protein resides in the cytoplasm. The enzyme catalyses hydrogencarbonate + acetyl-CoA + ATP = malonyl-CoA + ADP + phosphate + H(+). The catalysed reaction is N(6)-biotinyl-L-lysyl-[protein] + hydrogencarbonate + ATP = N(6)-carboxybiotinyl-L-lysyl-[protein] + ADP + phosphate + H(+). It participates in lipid metabolism; malonyl-CoA biosynthesis; malonyl-CoA from acetyl-CoA: step 1/1. In terms of biological role, catalyzes the rate-limiting reaction in the biogenesis of long-chain fatty acids. Carries out three functions: biotin carboxyl carrier protein, biotin carboxylase and carboxyltransferase. In Dictyostelium discoideum (Social amoeba), this protein is Acetyl-CoA carboxylase (accA).